A 313-amino-acid chain; its full sequence is Tagatose-6-phosphate kinase (313 aa).

This sequence belongs to the carbohydrate kinase PfkB family. LacC subfamily.

The catalysed reaction is D-tagatofuranose 6-phosphate + ATP = D-tagatofuranose 1,6-bisphosphate + ADP + H(+). The protein operates within carbohydrate metabolism; D-tagatose 6-phosphate degradation; D-glyceraldehyde 3-phosphate and glycerone phosphate from D-tagatose 6-phosphate: step 1/2. The chain is Tagatose-6-phosphate kinase from Enterococcus faecalis (strain ATCC 700802 / V583).